The following is a 341-amino-acid chain: uncharacterized protein (341 aa).

10 helical membrane-spanning segments follow: residues 10-30, 42-62, 107-127, 129-149, 155-175, 192-212, 226-246, 263-283, 290-310, and 313-333; these read ALGVVLLLFVVFLWLISSFLT, PFLITYINTGTFVFYLIPWYF, LGFCIIWFAANYFSNSSLGFT, VASFTIISSMSGFFTLGLGTI, FTLSKLLALMASVGGVIIVVT, ALGNAYALLAALLYGCYSVMV, LFFGLVGLFDLILLWPFLIIL, LIVLIINASITFVSDYLWVIA, LLVTVGMSLSIPLALFFDILL, and HYLNFSLILGSLLVFAGFIVV.

It belongs to the TPT transporter family.

It localises to the vacuole membrane. The protein localises to the golgi apparatus membrane. This is an uncharacterized protein from Schizosaccharomyces pombe (strain 972 / ATCC 24843) (Fission yeast).